A 397-amino-acid polypeptide reads, in one-letter code: Troponin T, skeletal muscle (397 aa).

The segment covering 1-16 has biased composition (acidic residues); that stretch reads MSDDEEYTSSEEEEVV. 3 disordered regions span residues 1 to 148, 234 to 261, and 294 to 397; these read MSDD…NFTI, ERQKQQLRHKALKKGLDPEALTGKYPPK, and DSNE…EEEE. Basic and acidic residues-rich tracts occupy residues 37–77, 84–129, and 136–148; these read EFIK…LKEK, TRAE…EKKR, and MKDKDKKGPNFTI. 2 stretches are compositionally biased toward basic and acidic residues: residues 294-307 and 319-329; these read DSNEKIWNEKKEQY and FGERPGKKAGE. A compositionally biased stretch (acidic residues) spans 331-397; that stretch reads ETPEGEEDAK…EEEEEEEEEE (67 aa).

The protein belongs to the troponin T family. In terms of processing, some glutamate residues are polyglycylated by TTLL3B. This modification occurs exclusively on glutamate residues and results in polyglycine chains on the gamma-carboxyl group. In terms of tissue distribution, isoform 3 is expressed in the hypoderm. Isoform 8 is expressed in the dorsal vessel. Isoform 6 is expressed in adult TDT muscle and isoform 9 in adult IFM, flight and jump muscles.

Functionally, troponin T is the tropomyosin-binding subunit of troponin, the thin filament regulatory complex which confers calcium-sensitivity to striated muscle actomyosin ATPase activity. The chain is Troponin T, skeletal muscle (up) from Drosophila melanogaster (Fruit fly).